A 192-amino-acid polypeptide reads, in one-letter code: MFNITDKAKVYMADLFAQQDEKDLGLKVDIEKAGTPAATVIFNFCFPKELSKTYQKFEYKGFDVYINKLNFVYLKDSEVALKDSSVGKKLIITAPNAKGEEPKEDAPLEEKIKYVIAADITPGLASHGGFVELVGITKQIDVILNFGGGCQGCSSVKSTLEQGVEAQLKARFPEIKSVRDVTNHANTDNAYM.

2 residues coordinate [4Fe-4S] cluster: Cys-150 and Cys-153.

It belongs to the NfuA family. As to quaternary structure, homodimer. Requires [4Fe-4S] cluster as cofactor.

Functionally, involved in iron-sulfur cluster biogenesis. Binds a 4Fe-4S cluster, can transfer this cluster to apoproteins, and thereby intervenes in the maturation of Fe/S proteins. Could also act as a scaffold/chaperone for damaged Fe/S proteins. This is Fe/S biogenesis protein NfuA from Vesicomyosocius okutanii subsp. Calyptogena okutanii (strain HA).